The chain runs to 162 residues: Putative ureidoglycolate lyase (162 aa).

Belongs to the ureidoglycolate lyase family. Homodimer. The cofactor is Ni(2+).

The catalysed reaction is (S)-ureidoglycolate = urea + glyoxylate. It functions in the pathway nitrogen metabolism; (S)-allantoin degradation. Functionally, catalyzes the catabolism of the allantoin degradation intermediate (S)-ureidoglycolate, generating urea and glyoxylate. Involved in the utilization of allantoin as nitrogen source. In Agrobacterium fabrum (strain C58 / ATCC 33970) (Agrobacterium tumefaciens (strain C58)), this protein is Putative ureidoglycolate lyase.